We begin with the raw amino-acid sequence, 305 residues long: tRNA pseudouridine synthase B (305 aa).

Asp39 (nucleophile) is an active-site residue.

This sequence belongs to the pseudouridine synthase TruB family. Type 1 subfamily.

The catalysed reaction is uridine(55) in tRNA = pseudouridine(55) in tRNA. Responsible for synthesis of pseudouridine from uracil-55 in the psi GC loop of transfer RNAs. This is tRNA pseudouridine synthase B from Staphylococcus aureus (strain bovine RF122 / ET3-1).